A 142-amino-acid polypeptide reads, in one-letter code: MSTFTAKNETVQRDWYLVDAEGKTLGRLCTELARRLRGKHKPVYTPHVDTGDYLVVINAEKIVVTGKKLQDKMYHRFTGYIGNLKTESLAQALERHPERVIETAVKGMLPKGPLGRQMYRKLKVYAGTEHPHAAQQPQVLDI.

It belongs to the universal ribosomal protein uL13 family. Part of the 50S ribosomal subunit.

Its function is as follows. This protein is one of the early assembly proteins of the 50S ribosomal subunit, although it is not seen to bind rRNA by itself. It is important during the early stages of 50S assembly. In Stenotrophomonas maltophilia (strain R551-3), this protein is Large ribosomal subunit protein uL13.